Here is a 323-residue protein sequence, read N- to C-terminus: Beta-ketoacyl-[acyl-carrier-protein] synthase III (323 aa).

Catalysis depends on residues cysteine 113 and histidine 250. The tract at residues 251–255 is ACP-binding; it reads QANLR. Asparagine 280 is a catalytic residue.

The protein belongs to the thiolase-like superfamily. FabH family. In terms of assembly, homodimer.

Its subcellular location is the cytoplasm. The catalysed reaction is malonyl-[ACP] + acetyl-CoA + H(+) = 3-oxobutanoyl-[ACP] + CO2 + CoA. It functions in the pathway lipid metabolism; fatty acid biosynthesis. Catalyzes the condensation reaction of fatty acid synthesis by the addition to an acyl acceptor of two carbons from malonyl-ACP. Catalyzes the first condensation reaction which initiates fatty acid synthesis and may therefore play a role in governing the total rate of fatty acid production. Possesses both acetoacetyl-ACP synthase and acetyl transacylase activities. Its substrate specificity determines the biosynthesis of branched-chain and/or straight-chain of fatty acids. This is Beta-ketoacyl-[acyl-carrier-protein] synthase III from Paracoccus denitrificans (strain Pd 1222).